The chain runs to 371 residues: Photosynthetic reaction center cytochrome c subunit (371 aa).

Heme contacts are provided by M114, C127, C130, H131, M153, H167, C178, C181, H182, M267, C278, C281, H282, C339, C342, and H343.

Component of the photosynthetic reaction center composed of protein subunits L (PufL), M (PufM), H (PuhA) and cytochrome C (PufC). The reaction center interacts with light-harvesting antenna complex LH1. Binds 4 heme groups per subunit.

It is found in the cellular chromatophore membrane. In terms of biological role, the reaction center of purple bacteria contains a tightly bound cytochrome molecule which re-reduces the photo oxidized primary electron donor. The chain is Photosynthetic reaction center cytochrome c subunit (pufC) from Roseobacter denitrificans (strain ATCC 33942 / OCh 114) (Erythrobacter sp. (strain OCh 114)).